Here is a 146-residue protein sequence, read N- to C-terminus: uncharacterized protein (146 aa).

Belongs to the BlaI transcriptional regulatory family.

This is an uncharacterized protein from Latilactobacillus sakei (Lactobacillus sakei).